The primary structure comprises 295 residues: Protoheme IX farnesyltransferase (295 aa).

The next 9 membrane-spanning stretches (helical) occupy residues 8-28 (VTKPGIIFGNLISVIGGFLLA), 35-55 (YPLFLSTLLGVSLVVASGCVF), 74-94 (VLVKGLIDPKVSLIYASVLGI), 98-118 (LLLYVAANALAMMLAVIGFVI), 132-152 (VYGTLIGSLSGAAPPVIGYCA), 162-182 (LILLLIFSLWQMPHSYAIAIF), 208-228 (ITLYILAFMVATLMLTLSGYA), 233-253 (LVVAAAVSVWWLGMALRGYKA), and 264-284 (FVFSIIAITSLSVMMSVDFNV).

The protein belongs to the UbiA prenyltransferase family. Protoheme IX farnesyltransferase subfamily.

It is found in the cell inner membrane. It catalyses the reaction heme b + (2E,6E)-farnesyl diphosphate + H2O = Fe(II)-heme o + diphosphate. It participates in porphyrin-containing compound metabolism; heme O biosynthesis; heme O from protoheme: step 1/1. Converts heme B (protoheme IX) to heme O by substitution of the vinyl group on carbon 2 of heme B porphyrin ring with a hydroxyethyl farnesyl side group. This chain is Protoheme IX farnesyltransferase, found in Yersinia pseudotuberculosis serotype O:1b (strain IP 31758).